Reading from the N-terminus, the 426-residue chain is MKLQKPKGTQDILPGDAAKWQYVESVARDTFSQYNYGEIRTPMFEHYEVISRSVGDTTDIVTKEMYDFYDKGDRHITLRPEGTAPVVRSYVENKLFAPEVQKPVKLYYIGSMFRYERPQAGRLREFHQIGVECFGAANPATDVETIAMAYHLFEKLGIKDVTLHLNSLGSPESRAAYRQALIDYLTPMRDQLSKDSQRRLDENPLRVLDSKEKEDKLAVEKAPSILDYLDEESQAHFEAVKDMLEALDIPYVIDTNMVRGLDYYNHTIFEFITSVEGSDLTICAGGRYDSLVGYFGGPETPGFGFGLGLERLLMIIEKQGITLPIETEMDVYLAVLGDGANSKALELVQAIRRQGFTAERDYLGRKIKAQFKSADTFKAKLVMTLGESEVEAGKAVIKNNRSRQELEVSFEDMMTNFENISEQLLS.

This sequence belongs to the class-II aminoacyl-tRNA synthetase family. As to quaternary structure, homodimer.

Its subcellular location is the cytoplasm. It catalyses the reaction tRNA(His) + L-histidine + ATP = L-histidyl-tRNA(His) + AMP + diphosphate + H(+). This is Histidine--tRNA ligase from Streptococcus pyogenes serotype M5 (strain Manfredo).